Here is a 525-residue protein sequence, read N- to C-terminus: Alcohol O-acetyltransferase 1 (525 aa).

Residues glycine 24–arginine 41 are membrane association. Catalysis depends on charge relay system residues histidine 191 and aspartate 195. Residues glutamine 508 to proline 525 form a membrane association region.

It belongs to the ATF1 alcohol acetyltransferase family.

The protein resides in the lipid droplet. It localises to the endoplasmic reticulum membrane. It catalyses the reaction an aliphatic alcohol + acetyl-CoA = an acetyl ester + CoA. The catalysed reaction is a fatty acyl-CoA + H2O = a fatty acid + CoA + H(+). The enzyme catalyses 3-methylbutanol + acetyl-CoA = 3-methylbutyl acetate + CoA. Found to be inhibited by cadmium, copper, zinc and mercurium divalent cations and sulfhydryl reagents. Inhibited by the addition of unsaturated fatty acids to the culture. In terms of biological role, major alcohol O-acetyltransferase that uses acetyl-CoA to synthesize acetate esters from various alcohols, producing ethyl acetate, isoamyl acetate, isobutyl acetate, butyl acetate, hexyl acetate, heptyl acetate and octyl acetate. The alcohol acyltransferase activity is promiscuous with regard to alcohol but relatively specific for acetyl-CoA since ATF1 does not use any other acyl-CoAs (C3, C4, C5, C6, C8, C10, C12). Acts also as an efficient thioesterase in vitro with specificity towards medium-chain-length acyl-CoAs. In natural environments, the production of aromatic volatile metabolites promotes dispersal through insect vectors. In Saccharomyces cerevisiae (strain ATCC 204508 / S288c) (Baker's yeast), this protein is Alcohol O-acetyltransferase 1.